The following is a 327-amino-acid chain: D-alanine--D-alanine ligase (327 aa).

The ATP-grasp domain occupies 113-312 (KRLWMTHDLS…YEDFVMQVVA (200 aa)). 139-194 (VADLGLPLIVKPAREGSSIGLSKVTDASQMREAFEKAAALDNDVIAETFIDGAELT) serves as a coordination point for ATP. Mg(2+)-binding residues include Asp266, Glu279, and Asn281.

It belongs to the D-alanine--D-alanine ligase family. Mg(2+) is required as a cofactor. The cofactor is Mn(2+).

It localises to the cytoplasm. The enzyme catalyses 2 D-alanine + ATP = D-alanyl-D-alanine + ADP + phosphate + H(+). Its pathway is cell wall biogenesis; peptidoglycan biosynthesis. Its function is as follows. Cell wall formation. The sequence is that of D-alanine--D-alanine ligase from Cupriavidus pinatubonensis (strain JMP 134 / LMG 1197) (Cupriavidus necator (strain JMP 134)).